A 686-amino-acid polypeptide reads, in one-letter code: Kinesin light chain (686 aa).

Disordered regions lie at residues 1–23 (MSGS…SQEQ) and 158–204 (KYDE…SVSA). The stretch at 20–160 (SQEQIITGTR…EYMNSIKKYD (141 aa)) forms a coiled coil. TPR repeat units follow at residues 215–248 (LRTL…LEKT), 257–290 (ATML…REKT), 299–332 (AATL…REKV), 341–374 (AKQL…YEKK), 383–416 (AKTK…AHER), and 472–505 (TTTL…RRNA). 2 disordered regions span residues 520–558 (QDLS…YEKT) and 586–686 (GYVE…SGNF). Over residues 675 to 686 (DNLSSRRQSGNF) the composition is skewed to polar residues.

It belongs to the kinesin light chain family. Oligomeric complex composed of two heavy chains and two light chains. Post-translationally, phosphorylation may modulate the process of mechanochemical coupling.

The protein resides in the cytoplasm. It is found in the cytoskeleton. In terms of biological role, kinesin is a microtubule-associated force-producing protein that may play a role in organelle transport. The light chain may function in coupling of cargo to the heavy chain or in the modulation of its ATPase activity. The polypeptide is Kinesin light chain (Strongylocentrotus purpuratus (Purple sea urchin)).